The chain runs to 366 residues: S-adenosylmethionine:tRNA ribosyltransferase-isomerase (366 aa).

It belongs to the QueA family. As to quaternary structure, monomer.

Its subcellular location is the cytoplasm. It catalyses the reaction 7-aminomethyl-7-carbaguanosine(34) in tRNA + S-adenosyl-L-methionine = epoxyqueuosine(34) in tRNA + adenine + L-methionine + 2 H(+). Its pathway is tRNA modification; tRNA-queuosine biosynthesis. Its function is as follows. Transfers and isomerizes the ribose moiety from AdoMet to the 7-aminomethyl group of 7-deazaguanine (preQ1-tRNA) to give epoxyqueuosine (oQ-tRNA). The polypeptide is S-adenosylmethionine:tRNA ribosyltransferase-isomerase (Agrobacterium fabrum (strain C58 / ATCC 33970) (Agrobacterium tumefaciens (strain C58))).